A 445-amino-acid polypeptide reads, in one-letter code: Phosphoglucosamine mutase (445 aa).

The Phosphoserine intermediate role is filled by Ser-99. Positions 99, 242, 244, and 246 each coordinate Mg(2+). Phosphoserine is present on Ser-99.

This sequence belongs to the phosphohexose mutase family. It depends on Mg(2+) as a cofactor. Activated by phosphorylation.

The enzyme catalyses alpha-D-glucosamine 1-phosphate = D-glucosamine 6-phosphate. Functionally, catalyzes the conversion of glucosamine-6-phosphate to glucosamine-1-phosphate. The chain is Phosphoglucosamine mutase from Helicobacter pylori (strain P12).